The chain runs to 338 residues: Mitochondrial amidoxime reducing component 2 (338 aa).

The transit peptide at 1–35 (MGSSSSTALARLGLPGQPRSTWLGVAALGLAAVAL) directs the protein to the mitochondrion. Residues K59, K138, and K144 each participate in a glycyl lysine isopeptide (Lys-Gly) (interchain with G-Cter in ubiquitin) cross-link. Position 156 is an N6-acetyllysine; alternate (K156). A Glycyl lysine isopeptide (Lys-Gly) (interchain with G-Cter in ubiquitin); alternate cross-link involves residue K156. Residues K173, K187, K289, and K296 each participate in a glycyl lysine isopeptide (Lys-Gly) (interchain with G-Cter in ubiquitin) cross-link. The MOSC domain occupies 188–336 (GRTTKKLYPS…LRVGDPVYRM (149 aa)).

Component of a complex composed of cytochrome b5, NADH-cytochrome b5 reductase (CYB5R3) and MTARC2. Mo-molybdopterin is required as a cofactor. Post-translationally, ubiquitinated by PRKN during mitophagy, leading to its degradation and enhancement of mitophagy. Deubiquitinated by USP30.

The protein resides in the mitochondrion outer membrane. The protein localises to the peroxisome. It catalyses the reaction N(omega)-hydroxy-L-arginine + 2 Fe(II)-[cytochrome b5] + 2 H(+) = L-arginine + 2 Fe(III)-[cytochrome b5] + H2O. In terms of biological role, catalyzes the reduction of N-oxygenated molecules, acting as a counterpart of cytochrome P450 and flavin-containing monooxygenases in metabolic cycles. As a component of prodrug-converting system, reduces a multitude of N-hydroxylated prodrugs particularly amidoximes, leading to increased drug bioavailability. May be involved in mitochondrial N(omega)-hydroxy-L-arginine (NOHA) reduction, regulating endogenous nitric oxide levels and biosynthesis. Postulated to cleave the N-OH bond of N-hydroxylated substrates in concert with electron transfer from NADH to cytochrome b5 reductase then to cytochrome b5, the ultimate electron donor that primes the active site for substrate reduction. The polypeptide is Mitochondrial amidoxime reducing component 2 (Mtarc2) (Rattus norvegicus (Rat)).